The primary structure comprises 152 residues: RxLR effector protein Avrblb1 (152 aa).

Positions 1-24 (MRSLLLTVLLNLVVLLATTGAVSS) are cleaved as a signal peptide. A RxLR-dEER motif is present at residues 51-72 (RSLRGDYNNEVTKEPNTSDEER). An RGD RLK-binding motif motif is present at residues 54–56 (RGD). N-linked (GlcNAc...) asparagine glycosylation is present at Asn66. Positions 99–152 (QSKTVLRYEDKLFTALYKSGETPRSLRTKHLDKASASVFFNRFKKWYDKNVGPS) are w motif.

Belongs to the RxLR effector family. As to quaternary structure, interacts with host defense protein RGA2/Rpi-blb1. Interacts with host legume-type lectin receptor kinase LECRK19.

It localises to the secreted. Its subcellular location is the host nucleus. The protein localises to the host nucleolus. The protein resides in the host cell membrane. Its function is as follows. Secreted effector that acts as an elicitor of hypersensitive response (HR) specifically on plants carrying defense protein RGA2/Rpi-blb1. Enhances P.infestans colonization of plant hosts Nicotiana benthamiana and potato Solanum bulbocastanum leaves. Associates with host legume-type lectin receptor kinases and disrupts attachments between the host plasma membrane and cell wall. In Phytophthora infestans (strain T30-4) (Potato late blight agent), this protein is RxLR effector protein Avrblb1.